Reading from the N-terminus, the 582-residue chain is Putative transcriptional regulator HVO_1357 (582 aa).

The 111-residue stretch at 19–129 folds into the Response regulatory domain; it reads VVLVVDDDED…EVKETVEELL (111 aa). Residue D67 is modified to 4-aspartylphosphate. Residues 165 to 203 adopt a coiled-coil conformation; it reads LSDLRSRLEAVRAEHEAAIRNREAQLDRLNRTNELLRDV. The HTH bat-type domain maps to 517 to 569; that stretch reads LTDRQRTVLETSLVSGYFEWPRGSTAEEVADSLGISPPTLHEHLRTAERKLIE.

In terms of biological role, may be part of a signal-dependent gene regulation cascade that is relevant to swimming motility. May be involved in the transcription regulation of target genes. In Haloferax volcanii (strain ATCC 29605 / DSM 3757 / JCM 8879 / NBRC 14742 / NCIMB 2012 / VKM B-1768 / DS2) (Halobacterium volcanii), this protein is Putative transcriptional regulator HVO_1357.